The primary structure comprises 1374 residues: DNA-directed RNA polymerase subunit beta (1374 aa).

The protein belongs to the RNA polymerase beta chain family. As to quaternary structure, the RNAP catalytic core consists of 2 alpha, 1 beta, 1 beta' and 1 omega subunit. When a sigma factor is associated with the core the holoenzyme is formed, which can initiate transcription.

It catalyses the reaction RNA(n) + a ribonucleoside 5'-triphosphate = RNA(n+1) + diphosphate. Functionally, DNA-dependent RNA polymerase catalyzes the transcription of DNA into RNA using the four ribonucleoside triphosphates as substrates. This Rickettsia prowazekii (strain Madrid E) protein is DNA-directed RNA polymerase subunit beta.